Consider the following 758-residue polypeptide: 5-methyltetrahydropteroyltriglutamate--homocysteine methyltransferase (758 aa).

5-methyltetrahydropteroyltri-L-glutamate is bound by residues 17–20 (RELK) and Lys117. L-homocysteine contacts are provided by residues 434–436 (IGS) and Glu487. L-methionine is bound by residues 434-436 (IGS) and Glu487. 5-methyltetrahydropteroyltri-L-glutamate contacts are provided by residues 518 to 519 (RC) and Trp564. Asp602 contacts L-homocysteine. Asp602 contributes to the L-methionine binding site. Glu608 provides a ligand contact to 5-methyltetrahydropteroyltri-L-glutamate. Zn(2+) is bound by residues His644, Cys646, and Glu668. Catalysis depends on His697, which acts as the Proton donor. Cys729 lines the Zn(2+) pocket.

It belongs to the vitamin-B12 independent methionine synthase family. Zn(2+) is required as a cofactor.

The enzyme catalyses 5-methyltetrahydropteroyltri-L-glutamate + L-homocysteine = tetrahydropteroyltri-L-glutamate + L-methionine. The protein operates within amino-acid biosynthesis; L-methionine biosynthesis via de novo pathway; L-methionine from L-homocysteine (MetE route): step 1/1. Functionally, catalyzes the transfer of a methyl group from 5-methyltetrahydrofolate to homocysteine resulting in methionine formation. This Yersinia pestis bv. Antiqua (strain Antiqua) protein is 5-methyltetrahydropteroyltriglutamate--homocysteine methyltransferase.